The sequence spans 155 residues: uncharacterized protein (155 aa).

4 consecutive transmembrane segments (helical) span residues 25–45, 50–70, 91–111, and 118–138; these read LPMG…FGWT, IFWF…IMTS, GVKI…ESLF, and WGCT…PILF.

It belongs to the major facilitator superfamily. CAR1 family.

Its subcellular location is the membrane. This is an uncharacterized protein from Schizosaccharomyces pombe (strain 972 / ATCC 24843) (Fission yeast).